Here is a 137-residue protein sequence, read N- to C-terminus: ATP synthase epsilon chain (137 aa).

The protein belongs to the ATPase epsilon chain family. As to quaternary structure, F-type ATPases have 2 components, CF(1) - the catalytic core - and CF(0) - the membrane proton channel. CF(1) has five subunits: alpha(3), beta(3), gamma(1), delta(1), epsilon(1). CF(0) has three main subunits: a, b and c.

Its subcellular location is the cell membrane. Functionally, produces ATP from ADP in the presence of a proton gradient across the membrane. This is ATP synthase epsilon chain from Streptococcus agalactiae serotype Ia (strain ATCC 27591 / A909 / CDC SS700).